A 419-amino-acid chain; its full sequence is Vascular endothelial growth factor C (419 aa).

The signal sequence occupies residues 1-31 (MHLLGFFSVACSLLAAALLPGPREAPAAAAA). Positions 32 to 111 (FESGLDLSDA…RTEETIKFAA (80 aa)) are cleaved as a propeptide — or 102. 3 disulfides stabilise this stretch: C131/C173, C162/C209, and C166/C211. N-linked (GlcNAc...) asparagine glycosylation is found at N175, N205, and N240. The propeptide occupies 228-419 (SLPATLPQCQ…PSYWKRPQMS (192 aa)). A run of 4 repeats spans residues 280-295 (CGPN…QCVC), 304-319 (CGPH…QCVC), 328-343 (CGAN…QCVC), and 347-362 (CPRN…ACEC). Residues 280–362 (CGPNKELDEE…LNPGKCACEC (83 aa)) form a 4 X 16 AA repeats of C-X(10)-C-X-C-X(1,3)-C region.

Belongs to the PDGF/VEGF growth factor family. As to quaternary structure, homodimer; non-covalent and antiparallel. Interacts with FLT4/VEGFR3; the interaction is required for FLT4/VEGFR3 homodimarization and activation. Undergoes a complex proteolytic maturation which generates a variety of processed secreted forms with increased activity toward VEGFR-3, but only the fully processed form could activate VEGFR-2. VEGF-C first form an antiparallel homodimer linked by disulfide bonds. Before secretion, a cleavage occurs between Arg-227 and Ser-228 producing a heterotetramer. The next extracellular step of the processing removes the N-terminal propeptide. Finally the mature VEGF-C is composed mostly of two VEGF homology domains (VHDs) bound by non-covalent interactions. Expressed in the spleen. Expressed in the lymph node, thymus, appendix and bone marrow. Expressed in the heart, placenta, skeletal muscle, ovary and small intestine. Expressed in the prostate, testis and colon.

It localises to the secreted. Growth factor active in angiogenesis, and endothelial cell growth, stimulating their proliferation and migration and also has effects on the permeability of blood vessels. May function in angiogenesis of the venous and lymphatic vascular systems during embryogenesis, and also in the maintenance of differentiated lymphatic endothelium in adults. Binds and activates KDR/VEGFR2 and FLT4/VEGFR3 receptors. The polypeptide is Vascular endothelial growth factor C (VEGFC) (Homo sapiens (Human)).